The following is a 182-amino-acid chain: ATP synthase subunit delta (182 aa).

Belongs to the ATPase delta chain family. As to quaternary structure, F-type ATPases have 2 components, F(1) - the catalytic core - and F(0) - the membrane proton channel. F(1) has five subunits: alpha(3), beta(3), gamma(1), delta(1), epsilon(1). CF(0) has four main subunits: a(1), b(1), b'(1) and c(10-14). The alpha and beta chains form an alternating ring which encloses part of the gamma chain. F(1) is attached to F(0) by a central stalk formed by the gamma and epsilon chains, while a peripheral stalk is formed by the delta, b and b' chains.

It is found in the cellular thylakoid membrane. Its function is as follows. F(1)F(0) ATP synthase produces ATP from ADP in the presence of a proton or sodium gradient. F-type ATPases consist of two structural domains, F(1) containing the extramembraneous catalytic core and F(0) containing the membrane proton channel, linked together by a central stalk and a peripheral stalk. During catalysis, ATP synthesis in the catalytic domain of F(1) is coupled via a rotary mechanism of the central stalk subunits to proton translocation. This protein is part of the stalk that links CF(0) to CF(1). It either transmits conformational changes from CF(0) to CF(1) or is implicated in proton conduction. The sequence is that of ATP synthase subunit delta from Synechococcus sp. (strain CC9902).